The following is a 387-amino-acid chain: Phosphoglycerate kinase (387 aa).

Substrate-binding positions include 21-23 (DLN), arginine 36, 59-62 (HLGR), arginine 113, and arginine 146. Residues lysine 197, glutamate 314, and 340–343 (GGDT) contribute to the ATP site.

The protein belongs to the phosphoglycerate kinase family. In terms of assembly, monomer.

The protein resides in the cytoplasm. It carries out the reaction (2R)-3-phosphoglycerate + ATP = (2R)-3-phospho-glyceroyl phosphate + ADP. It participates in carbohydrate degradation; glycolysis; pyruvate from D-glyceraldehyde 3-phosphate: step 2/5. This chain is Phosphoglycerate kinase, found in Marinomonas sp. (strain MWYL1).